The chain runs to 234 residues: Uridylate kinase (234 aa).

Glycine 9–serine 10 lines the ATP pocket. Glycine 43 contacts UMP. ATP-binding residues include glycine 44 and arginine 48. Residues aspartate 65 and valine 113–threonine 119 each bind UMP. The ATP site is built by threonine 139, tyrosine 145, and aspartate 148.

It belongs to the UMP kinase family. Homohexamer.

The protein resides in the cytoplasm. The enzyme catalyses UMP + ATP = UDP + ADP. Its pathway is pyrimidine metabolism; CTP biosynthesis via de novo pathway; UDP from UMP (UMPK route): step 1/1. With respect to regulation, inhibited by UTP. Functionally, catalyzes the reversible phosphorylation of UMP to UDP. This chain is Uridylate kinase, found in Methanococcoides burtonii (strain DSM 6242 / NBRC 107633 / OCM 468 / ACE-M).